The sequence spans 43 residues: Potassium channel toxin gamma-KTx 4.1 (43 aa).

Disulfide bonds link Cys5–Cys23, Cys11–Cys34, Cys20–Cys39, and Cys24–Cys41.

It belongs to the ergtoxin family. Gamma-KTx 4 subfamily. Expressed by the venom gland.

It localises to the secreted. Functionally, reversibly blocks Kv11/ERG potassium channels. This Centruroides limpidus (Mexican scorpion) protein is Potassium channel toxin gamma-KTx 4.1.